We begin with the raw amino-acid sequence, 316 residues long: ATP synthase gamma chain (316 aa).

It belongs to the ATPase gamma chain family. F-type ATPases have 2 components, CF(1) - the catalytic core - and CF(0) - the membrane proton channel. CF(1) has five subunits: alpha(3), beta(3), gamma(1), delta(1), epsilon(1). CF(0) has three main subunits: a, b and c.

It is found in the cellular thylakoid membrane. In terms of biological role, produces ATP from ADP in the presence of a proton gradient across the membrane. The gamma chain is believed to be important in regulating ATPase activity and the flow of protons through the CF(0) complex. In Prochlorococcus marinus (strain SARG / CCMP1375 / SS120), this protein is ATP synthase gamma chain.